Reading from the N-terminus, the 484-residue chain is Rho guanine nucleotide exchange factor 35 (484 aa).

Positions 139 to 418 (FSSDLGSEEE…ALIAPEDSPH (280 aa)) are disordered. A Phosphoserine modification is found at serine 184. The span at 217-237 (ESQGLLHPQEVQVLEEQGQQE) shows a compositional bias: low complexity. Residues 266–278 (NDEKGEQKQKQEQ) show a composition bias toward basic and acidic residues. Over residues 299–309 (GLNDGEWEQED) the composition is skewed to acidic residues. Composition is skewed to basic and acidic residues over residues 323–368 (GEER…KEKG) and 394–404 (RSREEENEHHG).

This is Rho guanine nucleotide exchange factor 35 (ARHGEF35) from Homo sapiens (Human).